The chain runs to 359 residues: DNA polymerase IV (359 aa).

The 182-residue stretch at 7–188 folds into the UmuC domain; that stretch reads IIHIDMDAFY…IPIGKFFGVG (182 aa). Mg(2+) is bound by residues D11 and D106. E107 is a catalytic residue.

This sequence belongs to the DNA polymerase type-Y family. Monomer. Mg(2+) is required as a cofactor.

The protein localises to the cytoplasm. The enzyme catalyses DNA(n) + a 2'-deoxyribonucleoside 5'-triphosphate = DNA(n+1) + diphosphate. Its function is as follows. Poorly processive, error-prone DNA polymerase involved in untargeted mutagenesis. Copies undamaged DNA at stalled replication forks, which arise in vivo from mismatched or misaligned primer ends. These misaligned primers can be extended by PolIV. Exhibits no 3'-5' exonuclease (proofreading) activity. May be involved in translesional synthesis, in conjunction with the beta clamp from PolIII. The sequence is that of DNA polymerase IV from Clostridium perfringens (strain ATCC 13124 / DSM 756 / JCM 1290 / NCIMB 6125 / NCTC 8237 / Type A).